We begin with the raw amino-acid sequence, 82 residues long: KKEKEQGCYGDFIECLKLYDKEENGTMMLAELQHALLALGESLDDEQVETLFADCMDPEDDEGFIPYSQFVQRLMSDPVVFD.

Positions 7 to 42 (GCYGDFIECLKLYDKEENGTMMLAELQHALLALGES) constitute an EF-hand domain.

In terms of assembly, myosin is a hexamer of 2 heavy chains and 4 light chains.

This is Myosin light chain alkali (Mlc1) from Drosophila sechellia (Fruit fly).